Consider the following 200-residue polypeptide: Glutathione S-transferase domain-containing protein DDB_G0273153/DDB_G0273923 (200 aa).

The 71-residue stretch at 1 to 71 (MISSIYIFKI…YISNNHNFSG (71 aa)) folds into the GST N-terminal domain. The region spanning 73–195 (SLQESARVDD…INSNNINSQS (123 aa)) is the GST C-terminal domain.

This sequence belongs to the GST superfamily.

This is Glutathione S-transferase domain-containing protein DDB_G0273153/DDB_G0273923 from Dictyostelium discoideum (Social amoeba).